A 172-amino-acid chain; its full sequence is 3-hydroxydecanoyl-[acyl-carrier-protein] dehydratase (172 aa).

His-70 is a catalytic residue.

The protein belongs to the thioester dehydratase family. FabA subfamily. Homodimer.

It localises to the cytoplasm. The catalysed reaction is a (3R)-hydroxyacyl-[ACP] = a (2E)-enoyl-[ACP] + H2O. It carries out the reaction (3R)-hydroxydecanoyl-[ACP] = (2E)-decenoyl-[ACP] + H2O. The enzyme catalyses (2E)-decenoyl-[ACP] = (3Z)-decenoyl-[ACP]. It participates in lipid metabolism; fatty acid biosynthesis. Its function is as follows. Necessary for the introduction of cis unsaturation into fatty acids. Catalyzes the dehydration of (3R)-3-hydroxydecanoyl-ACP to E-(2)-decenoyl-ACP and then its isomerization to Z-(3)-decenoyl-ACP. Can catalyze the dehydratase reaction for beta-hydroxyacyl-ACPs with saturated chain lengths up to 16:0, being most active on intermediate chain length. This Xylella fastidiosa (strain M12) protein is 3-hydroxydecanoyl-[acyl-carrier-protein] dehydratase.